A 120-amino-acid polypeptide reads, in one-letter code: Large ribosomal subunit protein bL17 (120 aa).

The protein belongs to the bacterial ribosomal protein bL17 family. In terms of assembly, part of the 50S ribosomal subunit. Contacts protein L32.

The chain is Large ribosomal subunit protein bL17 from Mesomycoplasma hyopneumoniae (strain 7448) (Mycoplasma hyopneumoniae).